The chain runs to 341 residues: MGSSSNGGVPPGFRFHPTDEELLHYYLKKKISYQKFEMEVIREVDLNKLEPWDLQERCKIGSTPQNEWYFFSHKDRKYPTGSRTNRATHAGFWKATGRDKCIRNSYKKIGMRKTLVFYKGRAPHGQKTDWIMHEYRLEDADDPQANPSEDGWVVCRVFMKKNLFKVVNEGSSSINSLDQHNHDASNNNHALQARSFMHRDSPYQLVRNHGAMTFELNKPDLALHQYPPIFHKPPSLGFDYSSGLARDSESAASEGLQYQQACEPGLDVGTCETVASHNHQQGLGEWAMMDRLVTCHMGNEDSSRGITYEDGNNNSSSVVQPVPATNQLTLRSEMDFWGYSK.

The 152-residue stretch at 9–160 folds into the NAC domain; that stretch reads VPPGFRFHPT…GWVVCRVFMK (152 aa). A DNA-binding region spans residues 109–166; sequence IGMRKTLVFYKGRAPHGQKTDWIMHEYRLEDADDPQANPSEDGWVVCRVFMKKNLFKV.

Expressed throughout the root cap, in both columella (COL) and lateral root cap (LRC) cells, with higher levels in the COL-adjoining LRC than the upper LRC. Also present at low levels expression in the tips of cotyledons and the cotyledon vasculature, as weel as in vasculature of the first pair of true leaves and at the hydathodes.

Its subcellular location is the nucleus. In terms of biological role, transcription activator. Together with BRN1 and SMB, regulates cellular maturation of root cap. Promotes the expression of genes involved in secondary cell walls (SCW) biosynthesis. The chain is Protein BEARSKIN2 (BRN2) from Arabidopsis thaliana (Mouse-ear cress).